The primary structure comprises 236 residues: MSYNLTDPYEIARYIKEAKKSTPIKAYIEGDLSNCDFTNIEKFNSGDLYILFGESEEILVIIEKNKDKIKNCRIEQDRRKSAIPLLDMLKINARIEPGATIRDKVIIGENAVIMMGAVVNIGAEIGEGTMVDMNAVVGARGKLGKNVHLGAGAVVAGVLEPPSSDPCTIEDNVLIGANAVILEGIKIGKGSVVAAGSIVTTDVPENVVVAGAPAKIIKEVDVKTKDKTKLLDDLRK.

This sequence belongs to the transferase hexapeptide repeat family. DapH subfamily.

It catalyses the reaction (S)-2,3,4,5-tetrahydrodipicolinate + acetyl-CoA + H2O = L-2-acetamido-6-oxoheptanedioate + CoA. The protein operates within amino-acid biosynthesis; L-lysine biosynthesis via DAP pathway; LL-2,6-diaminopimelate from (S)-tetrahydrodipicolinate (acetylase route): step 1/3. In terms of biological role, catalyzes the transfer of an acetyl group from acetyl-CoA to tetrahydrodipicolinate. In Clostridium botulinum (strain Kyoto / Type A2), this protein is 2,3,4,5-tetrahydropyridine-2,6-dicarboxylate N-acetyltransferase.